Consider the following 631-residue polypeptide: Nucleoside triphosphatase I (631 aa).

In terms of domain architecture, Helicase ATP-binding spans 42 to 204 (FLGLDTMHSI…TMIVNLLRPK (163 aa)). An ATP-binding site is contributed by 55-62 (HDTGVGKT). The DEXH box signature appears at 141–144 (DECH). A Helicase C-terminal domain is found at 367-536 (KFTEVCLKIL…LFKVFKESSI (170 aa)). The interval 457-524 (DIFILDMTWN…NIIKTKSKEF (68 aa)) is binding to the cap-specific mRNA (nucleoside-2'-O-)-methyltransferase.

Belongs to the helicase family. NPH I subfamily. Monomer. Interacts (via C-terminus) with RAP94 (via N-terminus). Interacts with the cap-specific mRNA (nucleoside-2'-O-)-methyltransferase.

The protein resides in the virion. The catalysed reaction is a ribonucleoside 5'-triphosphate + H2O = a ribonucleoside 5'-diphosphate + phosphate + H(+). Functionally, DNA-dependent ATPase required for providing the needed energy to achieve the termination of early transcripts. Acts in concert with the RAP94 subunit of the virion RNA polymerase and the capping enzyme/VTF to catalyze release of UUUUUNU-containing nascent RNA from the elongation complex. NPH-I must bind ssDNA in order to exhibit ATPase activity. The polypeptide is Nucleoside triphosphatase I (NPH1) (Erythrocebus patas (Red guenon)).